Here is a 179-residue protein sequence, read N- to C-terminus: Small ribosomal subunit protein uS7 (179 aa).

The protein belongs to the universal ribosomal protein uS7 family. In terms of assembly, part of the 30S ribosomal subunit. Contacts proteins S9 and S11. Cross-links to IF3 and the P and E site tRNAs.

Its function is as follows. One of the primary rRNA binding proteins, it binds directly to 16S rRNA where it nucleates assembly of the head domain of the 30S subunit. Is located at the subunit interface close to the decoding center, where it has been shown to contact mRNA. Has been shown to contact tRNA in both the P and E sites; it probably blocks exit of the E site tRNA. Protein S7 is also a translational repressor protein; it regulates the expression of the str operon members to different degrees by binding to its mRNA. The protein is Small ribosomal subunit protein uS7 (rpsG) of Escherichia coli (strain K12).